Consider the following 1558-residue polypeptide: Calmodulin-regulated spectrin-associated protein 1-B (1558 aa).

Residues 231–346 form the Calponin-homology (CH) domain; the sequence is WYWKLVPVRY…FIAELFWWFE (116 aa). Polar residues-rich tracts occupy residues 400-417, 440-450, and 504-516; these read VQNS…SGFS, ACRNRSNSLTQ, and ASTV…SHPG. Disordered stretches follow at residues 400–464, 504–523, 551–585, 602–675, 737–790, 803–850, and 943–968; these read VQNS…SDKR, ASTV…VRRI, NDIT…SDSR, AKEK…APGQ, TKEL…VASG, QRFG…QNKD, and DRSK…SSSP. Basic and acidic residues predominate over residues 602-620; that stretch reads AKEKSISLNKEEESGEGRQ. Positions 643–658 are enriched in polar residues; that stretch reads QTLNRTFTPNTSSEFE. A compositionally biased stretch (basic and acidic residues) spans 737 to 772; it reads TKELHPDKKQHFEEEVESAKLREDMNVKEHEDKDGG. Low complexity-rich tracts occupy residues 776 to 790 and 812 to 822; these read SSPG…VASG and RSSTSSSQRTT. Residues 849–887 adopt a coiled-coil conformation; that stretch reads KDNANMLASELVQLHMQLEEKRRAIESQKKKMEILTARQ. A compositionally biased stretch (basic and acidic residues) spans 943–955; the sequence is DRSKEAEEPEKAS. Residues 971–1004 are a coiled coil; it reads VEEEVDLNECNRSIELLNEAIGSIQQQMMQLSLQ. Disordered regions lie at residues 1041-1131, 1257-1293, 1305-1344, and 1360-1414; these read FVEP…TFHL, LRKQ…RREL, ELCE…KCPA, and LASV…ITST. Residues 1080–1090 are compositionally biased toward low complexity; that stretch reads SSTPTPTDSPS. Residues 1106–1115 are compositionally biased toward polar residues; the sequence is DFVQSSVRSE. Positions 1243–1303 form a coiled coil; the sequence is AFLLKQQRKA…IKQEYLRKKQ (61 aa). Residues 1317-1328 are compositionally biased toward basic residues; it reads PKTKPKKQRLKS. Residues 1421-1555 form the CKK domain; sequence GPKLFKEPSA…QAKRPAGPKK (135 aa).

It belongs to the CAMSAP1 family.

The protein resides in the cytoplasm. Its subcellular location is the cytoskeleton. Its function is as follows. Key microtubule-organizing protein that specifically binds the minus-end of non-centrosomal microtubules and regulates their dynamics and organization. Specifically recognizes growing microtubule minus-ends and stabilizes microtubules. Acts on free microtubule minus-ends that are not capped by microtubule-nucleating proteins or other factors and protects microtubule minus-ends from depolymerization. In contrast to camsap2 and camsap3, tracks along the growing tips of minus-end microtubules without significantly affecting the polymerization rate: binds at the very tip of the microtubules minus-end and acts as a minus-end tracking protein (-TIP) that dissociates from microtubules after allowing tubulin incorporation. Through interaction with spectrin may regulate neurite outgrowth. The polypeptide is Calmodulin-regulated spectrin-associated protein 1-B (camsap1b) (Danio rerio (Zebrafish)).